Consider the following 378-residue polypeptide: Carbamoyl phosphate synthase small chain (378 aa).

The interval 1-188 (MSILKEAYLY…THFAYGTSPN (188 aa)) is CPSase. Positions 49, 244, and 246 each coordinate L-glutamine. The 187-residue stretch at 192–378 (KVVAIDFGAK…FEEFAKLCCK (187 aa)) folds into the Glutamine amidotransferase type-1 domain. Catalysis depends on cysteine 272, which acts as the Nucleophile. Residues leucine 273, glutamine 276, asparagine 314, and tyrosine 317 each contribute to the L-glutamine site. Catalysis depends on residues histidine 355 and glutamate 357.

It belongs to the CarA family. As to quaternary structure, composed of two chains; the small (or glutamine) chain promotes the hydrolysis of glutamine to ammonia, which is used by the large (or ammonia) chain to synthesize carbamoyl phosphate. Tetramer of heterodimers (alpha,beta)4.

The catalysed reaction is hydrogencarbonate + L-glutamine + 2 ATP + H2O = carbamoyl phosphate + L-glutamate + 2 ADP + phosphate + 2 H(+). It catalyses the reaction L-glutamine + H2O = L-glutamate + NH4(+). It participates in amino-acid biosynthesis; L-arginine biosynthesis; carbamoyl phosphate from bicarbonate: step 1/1. It functions in the pathway pyrimidine metabolism; UMP biosynthesis via de novo pathway; (S)-dihydroorotate from bicarbonate: step 1/3. In terms of biological role, small subunit of the glutamine-dependent carbamoyl phosphate synthetase (CPSase). CPSase catalyzes the formation of carbamoyl phosphate from the ammonia moiety of glutamine, carbonate, and phosphate donated by ATP, constituting the first step of 2 biosynthetic pathways, one leading to arginine and/or urea and the other to pyrimidine nucleotides. The small subunit (glutamine amidotransferase) binds and cleaves glutamine to supply the large subunit with the substrate ammonia. In Helicobacter hepaticus (strain ATCC 51449 / 3B1), this protein is Carbamoyl phosphate synthase small chain.